A 3084-amino-acid polypeptide reads, in one-letter code: Highly reducing polyketide synthase sdnO (3084 aa).

Residues 4 to 430 (PIPLAVVGIA…GTNAHAVLEK (427 aa)) form the Ketosynthase family 3 (KS3) domain. Residues cysteine 178, histidine 313, and histidine 353 each act as for beta-ketoacyl synthase activity in the active site. The malonyl-CoA:ACP transacylase (MAT) domain stretch occupies residues 541-841 (FIFTGQGAQW…LAGPLRQSVA (301 aa)). The active-site For malonyltransferase activity is the serine 632. Positions 931–1071 (HDLLGLRMTD…GSVLIDLVSS (141 aa)) are N-terminal hotdog fold. Positions 931–1243 (HDLLGLRMTD…RSAEADMLVF (313 aa)) are dehydratase (DH) domain. Positions 931–1275 (HDLLGLRMTD…LRSLAALDGA (345 aa)) constitute a PKS/mFAS DH domain. The active-site Proton acceptor; for dehydratase activity is the histidine 963. Residues 1099-1275 (LQPGEDIPPS…LRSLAALDGA (177 aa)) form a C-terminal hotdog fold region. Catalysis depends on aspartate 1177, which acts as the Proton donor; for dehydratase activity. An enoylreductase (ER) domain region spans residues 1733–2045 (GTAHAATFVE…RHENMTKYVV (313 aa)). The tract at residues 2069–2252 (ATYVVAGGLG…YMALNIGLIE (184 aa)) is catalytic ketoreductase (KRc) domain. In terms of domain architecture, Carrier spans 2363 to 2440 (DIEAFAARAI…ALARKVTLRS (78 aa)). Serine 2400 carries the O-(pantetheine 4'-phosphoryl)serine modification. The tract at residues 2445–2501 (GGAGGDASSTGNSESMARTPSDSSTVPTSIPATPSRSPSREPPAKETLTKSQQHLPI) is disordered. Over residues 2456-2481 (NSESMARTPSDSSTVPTSIPATPSRS) the composition is skewed to polar residues. A compositionally biased stretch (basic and acidic residues) spans 2482–2492 (PSREPPAKETL). Residues 2864 to 3084 (HFYSQLNRAF…LGVVRRVVEG (221 aa)) are choline/carnitine acyltransferase domain.

It participates in antibiotic biosynthesis. In terms of biological role, highly reducing polyketide synthase; part of the gene cluster that mediates the biosynthesis of sordarin and hypoxysordarin, glycoside antibiotics with a unique tetracyclic diterpene aglycone structure. First, the geranylgeranyl diphosphate synthase sdnC constructs GGDP from farnesyl diphosphate and isopentenyl diphosphate. The diterpene cyclase sdnA then catalyzes the cyclization of GGDP to afford cycloaraneosene. Cycloaraneosene is then hydroxylated four times by the putative cytochrome P450 monooxygenases sdnB, sdnE, sdnF and sdnH to give a hydroxylated cycloaraneosene derivative such as cycloaraneosene-8,9,13,19-tetraol. Although the order of the hydroxylations is unclear, at least C8, C9 and C13 of the cycloaraneosene skeleton are hydroxylated before the sordaricin formation. Dehydration of the 13-hydroxy group of the hydroxylated cycloaraneosene derivative might be catalyzed by an unassigned hypothetical protein such as sdnG and sdnP to construct the cyclopentadiene moiety. The FAD-dependent oxidoreductase sdnN is proposed to catalyze the oxidation at C9 of the hydroxylated cycloaraneosene derivative and also catalyze the Baeyer-Villiger oxidation to give the lactone intermediate. The presumed lactone intermediate would be hydrolyzed to give an acrolein moiety and a carboxylate moiety. Then, [4+2]cycloaddition would occur between the acrolein moiety and the cyclopentadiene moiety to give sordaricin. SdnN might also be involved in the [4+2]cycloaddition after the hypothesized oxidation to accommodate the oxidized product and prompt the [4+2]cycloaddition. GDP-6-deoxy-D-altrose may be biosynthesized from GDP-D-mannose by the putative GDP-mannose-4,6-dehydratase sdnI and the short-chain dehydrogenase sdnK. The glycosyltransferase sdnJ catalyzes the attachment of 6-deoxy-D-altrose onto the 19-hydroxy group of sordaricin to give 4'-O-demethylsordarin. The methyltransferase sdnD would complete the biosynthesis of sordarin. Sordarin can be further modified into hypoxysordarin. The unique acyl chain at the 3'-hydroxy group of hypoxysordarin would be constructed by an iterative type I PKS sdnO and the trans-acting polyketide methyltransferase sdnL. SdnL would be responsible for the introduction of an alpha-methyl group of the polyketide chain. Alternatively, the putative beta-lactamase-like sdnR might be responsible for the cleavage and transfer of the polyketide chain from the PKS sdnO to sordarin. Two putative cytochrome P450 monooxygenases, sdnQ and sdnT, might catalyze the epoxidations of the polyketide chain to complete the biosynthesis of hypoxysordarin. Transcriptional regulators sdnM and sdnS are presumably encoded for the transcriptional regulation of the expression of the sdn gene cluster. In Sordaria araneosa (Pleurage araneosa), this protein is Highly reducing polyketide synthase sdnO.